The chain runs to 526 residues: Peptide chain release factor 3 (526 aa).

The region spanning D9–Q277 is the tr-type G domain. GTP-binding positions include S18 to T25, D86 to H90, and N140 to D143.

This sequence belongs to the TRAFAC class translation factor GTPase superfamily. Classic translation factor GTPase family. PrfC subfamily.

Its subcellular location is the cytoplasm. Increases the formation of ribosomal termination complexes and stimulates activities of RF-1 and RF-2. It binds guanine nucleotides and has strong preference for UGA stop codons. It may interact directly with the ribosome. The stimulation of RF-1 and RF-2 is significantly reduced by GTP and GDP, but not by GMP. This is Peptide chain release factor 3 from Shewanella loihica (strain ATCC BAA-1088 / PV-4).